The following is a 155-amino-acid chain: UPF0178 protein Gmet_1725 (155 aa).

Belongs to the UPF0178 family.

This Geobacter metallireducens (strain ATCC 53774 / DSM 7210 / GS-15) protein is UPF0178 protein Gmet_1725.